A 519-amino-acid chain; its full sequence is Probable cytochrome P450 513D1 (519 aa).

The chain crosses the membrane as a helical span at residues 1–21; the sequence is MGISSIIIILFIIVLLKKLIK. Heme is bound at residue C464.

It belongs to the cytochrome P450 family. Heme serves as cofactor.

The protein localises to the membrane. The protein is Probable cytochrome P450 513D1 (cyp513D1) of Dictyostelium discoideum (Social amoeba).